Reading from the N-terminus, the 430-residue chain is Sesquiterpene synthase Agr5 (430 aa).

A signal peptide spans 1–25 (MASSLLEPSLAAIALVILLASVSLS). Asn-113 is a glycosylation site (N-linked (GlcNAc...) asparagine). Mg(2+) contacts are provided by Asp-176, Asn-311, Ser-315, and Glu-319. Positions 176 to 180 (DEYTD) match the DDXXD motif motif. Arg-401 and Tyr-402 together coordinate (2E,6E)-farnesyl diphosphate.

The protein belongs to the terpene synthase family. It depends on Mg(2+) as a cofactor.

It carries out the reaction (2E,6E)-farnesyl diphosphate = viridiflorene + diphosphate. Terpene cyclase that catalyzes the cyclization of farnesyl diphosphate (FPP) to viridiflorene and viridiflorol. This Cyclocybe aegerita (Black poplar mushroom) protein is Sesquiterpene synthase Agr5.